We begin with the raw amino-acid sequence, 196 residues long: uncharacterized protein (196 aa).

This sequence to H.influenzae HI_0431.

This is an uncharacterized protein from Escherichia coli (strain K12).